The sequence spans 217 residues: Grancalcin (217 aa).

EF-hand domains lie at 48-83 (SSAG…SGIN), 89-122 (FSLE…AALN), 119-154 (AALN…MGYR), and 155-180 (LSPQ…DYVA). Ca(2+) is bound by residues Asp65, Asp69, and Glu71. Residues Asp132, Asp134, Ser136, Thr138, and Glu143 each coordinate Ca(2+).

In terms of assembly, homodimer. Interacts with SRI and LCP1. In terms of tissue distribution, detected in neutrophils and macrophages (at protein level). Highly expressed in bone marrow.

The protein localises to the cytoplasm. It localises to the cytoplasmic granule membrane. In terms of biological role, calcium-binding protein that may play a role in the adhesion of neutrophils to fibronectin. May play a role in the formation of focal adhesions. The sequence is that of Grancalcin (GCA) from Homo sapiens (Human).